The sequence spans 177 residues: CASP-like protein 5A2 (177 aa).

Residues Met-1 to Thr-36 are Cytoplasmic-facing. The helical transmembrane segment at Ile-37 to Met-57 threads the bilayer. The Extracellular portion of the chain corresponds to Val-58–Ala-68. The N-linked (GlcNAc...) asparagine glycan is linked to Asn-62. A helical membrane pass occupies residues Phe-69–Ile-89. Residues Asp-90 to Ser-103 are Cytoplasmic-facing. Residues Leu-104 to Ala-124 form a helical membrane-spanning segment. At Cys-125–Thr-153 the chain is on the extracellular side. The helical transmembrane segment at Ala-154–Leu-174 threads the bilayer. Over Ala-175–Arg-177 the chain is Cytoplasmic.

Belongs to the Casparian strip membrane proteins (CASP) family. Homodimer and heterodimers.

It localises to the cell membrane. This chain is CASP-like protein 5A2, found in Ginkgo biloba (Ginkgo).